We begin with the raw amino-acid sequence, 179 residues long: O-acetyl-ADP-ribose deacetylase (179 aa).

The 175-residue stretch at 1 to 175 (MTSRLQVIQG…LYARLLTQQG (175 aa)) folds into the Macro domain. Substrate-binding positions include 11–12 (DI), asparagine 25, 33–35 (GVD), and 122–126 (STGVY). The Proton acceptor role is filled by aspartate 35.

This sequence belongs to the MacroD-type family. YmdB subfamily. As to quaternary structure, homodimer. Interacts with RNase III.

The enzyme catalyses 3''-O-acetyl-ADP-D-ribose + H2O = ADP-D-ribose + acetate + H(+). The catalysed reaction is 2''-O-acetyl-ADP-D-ribose + H2O = ADP-D-ribose + acetate + H(+). Its function is as follows. Deacetylates O-acetyl-ADP ribose to yield ADP-ribose and free acetate. Down-regulates ribonuclease 3 (RNase III) activity. Acts by interacting directly with the region of the ribonuclease that is required for dimerization/activation. The protein is O-acetyl-ADP-ribose deacetylase of Salmonella typhi.